A 77-amino-acid chain; its full sequence is uncharacterized protein (77 aa).

Putative sugar-binding regulatory protein for the alpha-amylase gene. This is an uncharacterized protein from Streptomyces violaceus (Streptomyces venezuelae).